The following is a 419-amino-acid chain: Subtilisin-like protease 2 (419 aa).

Positions 1-16 (MQLLNFGLLLLPFVAG) are cleaved as a signal peptide. Residues 17 to 122 (DLAPQPEPLL…VHPDQHVYLA (106 aa)) constitute a propeptide that is removed on maturation. In terms of domain architecture, Inhibitor I9 spans 36 to 122 (QYIVTLKEGL…VHPDQHVYLA (87 aa)). One can recognise a Peptidase S8 domain in the interval 131 to 419 (RWGLGYMSSK…IQERKFKLPK (289 aa)). Active-site charge relay system residues include aspartate 169 and histidine 201. Residues asparagine 248, asparagine 261, and asparagine 348 are each glycosylated (N-linked (GlcNAc...) asparagine). The active-site Charge relay system is serine 357. Residue asparagine 388 is glycosylated (N-linked (GlcNAc...) asparagine).

It belongs to the peptidase S8 family.

Its subcellular location is the secreted. Its function is as follows. Secreted subtilisin-like serine protease with keratinolytic activity that contributes to pathogenicity. The protein is Subtilisin-like protease 2 (SUB2) of Arthroderma benhamiae (Trichophyton mentagrophytes).